A 251-amino-acid polypeptide reads, in one-letter code: Small ribosomal subunit protein uS3 (251 aa).

In terms of domain architecture, KH type-2 spans isoleucine 39 to arginine 112. The tract at residues glutamate 222 to lysine 251 is disordered. The segment covering alanine 240–lysine 251 has biased composition (basic and acidic residues).

The protein belongs to the universal ribosomal protein uS3 family. Part of the 30S ribosomal subunit. Forms a tight complex with proteins S10 and S14.

Functionally, binds the lower part of the 30S subunit head. Binds mRNA in the 70S ribosome, positioning it for translation. The chain is Small ribosomal subunit protein uS3 from Anaeroplasma abactoclasticum.